The sequence spans 334 residues: Glycerol-3-phosphate dehydrogenase [NAD(P)+] (334 aa).

Positions 11, 12, 32, and 106 each coordinate NADPH. Sn-glycerol 3-phosphate contacts are provided by K106 and G136. NADPH is bound at residue A140. Residues K191, D244, S254, R255, and N256 each contribute to the sn-glycerol 3-phosphate site. The active-site Proton acceptor is the K191. Position 255 (R255) interacts with NADPH. Positions 279 and 281 each coordinate NADPH.

The protein belongs to the NAD-dependent glycerol-3-phosphate dehydrogenase family.

The protein resides in the cytoplasm. The catalysed reaction is sn-glycerol 3-phosphate + NAD(+) = dihydroxyacetone phosphate + NADH + H(+). The enzyme catalyses sn-glycerol 3-phosphate + NADP(+) = dihydroxyacetone phosphate + NADPH + H(+). It participates in membrane lipid metabolism; glycerophospholipid metabolism. Catalyzes the reduction of the glycolytic intermediate dihydroxyacetone phosphate (DHAP) to sn-glycerol 3-phosphate (G3P), the key precursor for phospholipid synthesis. This is Glycerol-3-phosphate dehydrogenase [NAD(P)+] from Parafrankia sp. (strain EAN1pec).